The primary structure comprises 446 residues: NADH-quinone oxidoreductase subunit D (446 aa).

The protein belongs to the complex I 49 kDa subunit family. NDH-1 is composed of 14 different subunits. Subunits NuoB, C, D, E, F, and G constitute the peripheral sector of the complex.

The protein localises to the cell membrane. It catalyses the reaction a quinone + NADH + 5 H(+)(in) = a quinol + NAD(+) + 4 H(+)(out). NDH-1 shuttles electrons from NADH, via FMN and iron-sulfur (Fe-S) centers, to quinones in the respiratory chain. The immediate electron acceptor for the enzyme in this species is believed to be a menaquinone. Couples the redox reaction to proton translocation (for every two electrons transferred, four hydrogen ions are translocated across the cytoplasmic membrane), and thus conserves the redox energy in a proton gradient. The polypeptide is NADH-quinone oxidoreductase subunit D (Nocardioides sp. (strain ATCC BAA-499 / JS614)).